Reading from the N-terminus, the 280-residue chain is Lipase chaperone (280 aa).

A helical transmembrane segment spans residues A5 to L22.

It belongs to the lipase chaperone family.

Its subcellular location is the cell inner membrane. May be involved in the folding of the extracellular lipase during its passage through the periplasm. The polypeptide is Lipase chaperone (lifO) (Vibrio vulnificus (strain YJ016)).